We begin with the raw amino-acid sequence, 926 residues long: Alpha-aminoadipic semialdehyde synthase, mitochondrial (926 aa).

Residues 1 to 27 (MLQVHRTGLGRLGVSLSKGLHHKAVLA) constitute a mitochondrion transit peptide. The interval 28–476 (VRREDVNAWE…ESRERAQSLS (449 aa)) is lysine-ketoglutarate reductase. 2 positions are modified to N6-acetyllysine: Lys-48 and Lys-56. Position 93 is an N6-acetyllysine; alternate (Lys-93). At Lys-93 the chain carries N6-succinyllysine; alternate. Lys-128 bears the N6-acetyllysine mark. At Lys-138 the chain carries N6-acetyllysine; alternate. Lys-138 carries the N6-succinyllysine; alternate modification. N6-succinyllysine is present on Lys-274. The residue at position 286 (Lys-286) is an N6-acetyllysine; alternate. Lys-286 carries the N6-succinyllysine; alternate modification. Lys-333 bears the N6-succinyllysine mark. Lys-458 carries the post-translational modification N6-acetyllysine; alternate. Lys-458 bears the N6-succinyllysine; alternate mark. Positions 477-926 (MGTRRKVLVL…IYTTQSTIKP (450 aa)) are saccharopine dehydrogenase. Positions 488, 512, and 516 each coordinate NAD(+). Lys-523 is subject to N6-acetyllysine; alternate. At Lys-523 the chain carries N6-succinyllysine; alternate. Ile-533 is a binding site for NAD(+). The residue at position 535 (Lys-535) is an N6-acetyllysine; alternate. Lys-535 is modified (N6-succinyllysine; alternate). NAD(+)-binding residues include Leu-554, Ala-576, and Ser-577. An L-saccharopine-binding site is contributed by 577 to 578 (SY). Residue Lys-584 is modified to N6-acetyllysine; alternate. Lys-584 carries the post-translational modification N6-succinyllysine; alternate. NAD(+) is bound by residues Leu-603, Asp-604, and Pro-605. Asp-604 contacts L-saccharopine. Arg-703 provides a ligand contact to L-saccharopine. Position 707 is an N6-acetyllysine (Lys-707). 724–726 (TLR) serves as a coordination point for L-saccharopine. An N6-succinyllysine modification is found at Lys-732. At Lys-739 the chain carries N6-acetyllysine. An N6-acetyllysine; alternate modification is found at Lys-761. Position 761 is an N6-succinyllysine; alternate (Lys-761). Residue Lys-780 is modified to N6-acetyllysine.

This sequence in the N-terminal section; belongs to the AlaDH/PNT family. The protein in the C-terminal section; belongs to the saccharopine dehydrogenase family. Homotetramer. Expressed in all 16 tissues examined with highest expression in the liver.

It localises to the mitochondrion. It catalyses the reaction L-saccharopine + NADP(+) + H2O = L-lysine + 2-oxoglutarate + NADPH + H(+). The enzyme catalyses L-saccharopine + NAD(+) + H2O = (S)-2-amino-6-oxohexanoate + L-glutamate + NADH + H(+). The protein operates within amino-acid degradation; L-lysine degradation via saccharopine pathway; glutaryl-CoA from L-lysine: step 1/6. It functions in the pathway amino-acid degradation; L-lysine degradation via saccharopine pathway; glutaryl-CoA from L-lysine: step 2/6. In terms of biological role, bifunctional enzyme that catalyzes the first two steps in lysine degradation. This Homo sapiens (Human) protein is Alpha-aminoadipic semialdehyde synthase, mitochondrial.